A 352-amino-acid polypeptide reads, in one-letter code: UDP-3-O-acylglucosamine N-acyltransferase (352 aa).

Catalysis depends on His-244, which acts as the Proton acceptor.

Belongs to the transferase hexapeptide repeat family. LpxD subfamily. As to quaternary structure, homotrimer.

The enzyme catalyses a UDP-3-O-[(3R)-3-hydroxyacyl]-alpha-D-glucosamine + a (3R)-hydroxyacyl-[ACP] = a UDP-2-N,3-O-bis[(3R)-3-hydroxyacyl]-alpha-D-glucosamine + holo-[ACP] + H(+). It functions in the pathway bacterial outer membrane biogenesis; LPS lipid A biosynthesis. Catalyzes the N-acylation of UDP-3-O-acylglucosamine using 3-hydroxyacyl-ACP as the acyl donor. Is involved in the biosynthesis of lipid A, a phosphorylated glycolipid that anchors the lipopolysaccharide to the outer membrane of the cell. The sequence is that of UDP-3-O-acylglucosamine N-acyltransferase from Leptospira biflexa serovar Patoc (strain Patoc 1 / Ames).